The chain runs to 604 residues: Elongation factor 4 (604 aa).

Residues 2–184 enclose the tr-type G domain; it reads DHIRNFSIIA…AVITRMPAPR (183 aa). GTP-binding positions include 14–19 and 131–134; these read DHGKST and NKMD.

The protein belongs to the TRAFAC class translation factor GTPase superfamily. Classic translation factor GTPase family. LepA subfamily.

It localises to the cell inner membrane. The enzyme catalyses GTP + H2O = GDP + phosphate + H(+). Its function is as follows. Required for accurate and efficient protein synthesis under certain stress conditions. May act as a fidelity factor of the translation reaction, by catalyzing a one-codon backward translocation of tRNAs on improperly translocated ribosomes. Back-translocation proceeds from a post-translocation (POST) complex to a pre-translocation (PRE) complex, thus giving elongation factor G a second chance to translocate the tRNAs correctly. Binds to ribosomes in a GTP-dependent manner. The chain is Elongation factor 4 from Methylibium petroleiphilum (strain ATCC BAA-1232 / LMG 22953 / PM1).